Consider the following 447-residue polypeptide: MREIVHLQTGQCGNQIGAAFWQTISGEHGLDGSGVYNGTSDLQLERMNVYFNEASGNKYVPRAVLVDLEPGTMDAVRAGPFGELFRPDNFVFGQSGAGNNWAKGHYTEGAELVDNVVDVVRREAEGCDCLQGFQITHSLGGGTGAGMGTLLISKIREEFPDRMMATFSVVPSPKVSDTVVEPYNATLSVHQLVEHSDETFCIDNEALYDICMRTLKLSNPSYGDLNHLVSAVMSGVTTCLRFPGQLNSDLRKLAVNMVPFPRLHFFMVGFAPLTSRGAYSFRAVSVPELTQQMFDPKNMMAASDFRNGRYLTCSAIFRGKVSMKEVEDQMRNIQSKNQSYFVEWIPNNIQTALCSIPPRGLKMSSTFIGNSTSIQELFKRVGDQFTAMFRRKAFLHWYTGEGMDEMEFTEAESNMNDLVSEYQQYQDASISEGEEEYAEEEIMEGEE.

Residues Gln11, Glu69, Ser138, Gly142, Thr143, Gly144, Asn204, and Asn226 each contribute to the GTP site. Position 69 (Glu69) interacts with Mg(2+).

This sequence belongs to the tubulin family. As to quaternary structure, dimer of alpha and beta chains. A typical microtubule is a hollow water-filled tube with an outer diameter of 25 nm and an inner diameter of 15 nM. Alpha-beta heterodimers associate head-to-tail to form protofilaments running lengthwise along the microtubule wall with the beta-tubulin subunit facing the microtubule plus end conferring a structural polarity. Microtubules usually have 13 protofilaments but different protofilament numbers can be found in some organisms and specialized cells. The cofactor is Mg(2+).

Its subcellular location is the cytoplasm. It is found in the cytoskeleton. Tubulin is the major constituent of microtubules, a cylinder consisting of laterally associated linear protofilaments composed of alpha- and beta-tubulin heterodimers. Microtubules grow by the addition of GTP-tubulin dimers to the microtubule end, where a stabilizing cap forms. Below the cap, tubulin dimers are in GDP-bound state, owing to GTPase activity of alpha-tubulin. The chain is Tubulin beta-1 chain (benA) from Emericella nidulans (strain FGSC A4 / ATCC 38163 / CBS 112.46 / NRRL 194 / M139) (Aspergillus nidulans).